A 581-amino-acid chain; its full sequence is Lipoprotein LpqB (581 aa).

Positions Met-1–Ala-23 are cleaved as a signal peptide. The N-palmitoyl cysteine moiety is linked to residue Cys-24. The S-diacylglycerol cysteine moiety is linked to residue Cys-24.

This sequence belongs to the LpqB lipoprotein family.

The protein resides in the cell membrane. This chain is Lipoprotein LpqB, found in Corynebacterium diphtheriae (strain ATCC 700971 / NCTC 13129 / Biotype gravis).